Consider the following 116-residue polypeptide: uncharacterized protein (116 aa).

The helical transmembrane segment at 52 to 72 threads the bilayer; the sequence is VFCSANSVPLYLLLLTSALHF.

The protein localises to the mitochondrion membrane. This is an uncharacterized protein from Arabidopsis thaliana (Mouse-ear cress).